The chain runs to 238 residues: Synapse differentiation-inducing gene protein 1-like (238 aa).

3 disordered regions span residues 1 to 24, 78 to 111, and 126 to 155; these read MESL…GPYP, KVKE…PGQA, and EEFQ…NFLT. The Extracellular portion of the chain corresponds to 1–162; the sequence is MESLSELQNP…FLTLPPRDHL (162 aa). The segment covering 133 to 151 has biased composition (acidic residues); it reads GDPEEEESDATSTESESED. Residues 163 to 183 traverse the membrane as a helical segment; it reads GLTIFSMLCCFWPLGIAAFYF. Topologically, residues 184 to 205 are cytoplasmic; that stretch reads SQGTSKAISKGDFRLANTTSRR. The chain crosses the membrane as a helical span at residues 206–226; sequence ALFLATLSIAVGAGLYVAVVV. The Extracellular portion of the chain corresponds to 227–238; sequence ALAAYMSQNGHS.

The protein belongs to the CD225/Dispanin family.

The protein resides in the membrane. It localises to the golgi apparatus. It is found in the cis-Golgi network. The chain is Synapse differentiation-inducing gene protein 1-like (SYNDIG1L) from Bos taurus (Bovine).